The primary structure comprises 137 residues: uncharacterized protein (137 aa).

Belongs to the ycf72 family.

Its subcellular location is the plastid. The protein localises to the chloroplast. This is an uncharacterized protein from Saccharum hybrid (Sugarcane).